A 185-amino-acid polypeptide reads, in one-letter code: uncharacterized protein (185 aa).

A Nudix hydrolase domain is found at 39–177 (LWHASAGVLV…SWPFVPDSRA (139 aa)). A Nudix box motif is present at residues 77–99 (GGVVDPGETPQETAIREVGEELG). Mg(2+) is bound by residues Glu-93 and Glu-97.

The protein belongs to the Nudix hydrolase family. Requires Mg(2+) as cofactor.

This is an uncharacterized protein from Rhodococcus erythropolis (Arthrobacter picolinophilus).